A 287-amino-acid chain; its full sequence is Polyamine aminopropyltransferase (287 aa).

Residues 5–238 (EIWYETLHAN…GIMTFAWASN (234 aa)) form the PABS domain. Gln33 contributes to the S-methyl-5'-thioadenosine binding site. His64 and Asp88 together coordinate spermidine. S-methyl-5'-thioadenosine-binding positions include Glu108 and 140–141 (DG). The Proton acceptor role is filled by Asp158. 158–161 (DCTD) contacts spermidine. Pro165 provides a ligand contact to S-methyl-5'-thioadenosine.

It belongs to the spermidine/spermine synthase family. Homodimer or homotetramer.

The protein resides in the cytoplasm. The catalysed reaction is S-adenosyl 3-(methylsulfanyl)propylamine + putrescine = S-methyl-5'-thioadenosine + spermidine + H(+). Its pathway is amine and polyamine biosynthesis; spermidine biosynthesis; spermidine from putrescine: step 1/1. In terms of biological role, catalyzes the irreversible transfer of a propylamine group from the amino donor S-adenosylmethioninamine (decarboxy-AdoMet) to putrescine (1,4-diaminobutane) to yield spermidine. The polypeptide is Polyamine aminopropyltransferase (Pectobacterium carotovorum subsp. carotovorum (strain PC1)).